The sequence spans 127 residues: MPKTFHRTDRVSAQLRRELGTLVHNAVREHGLPSVSVSDVEITRDMAHAKVFVTALMPERSAEAVAGLKELGYRLRMDLARAMKLRHVPELHFHYDDSVDRGEHIDNILRDLPDTLAAEKRREGDDE.

Belongs to the RbfA family. As to quaternary structure, monomer. Binds 30S ribosomal subunits, but not 50S ribosomal subunits or 70S ribosomes.

It is found in the cytoplasm. Functionally, one of several proteins that assist in the late maturation steps of the functional core of the 30S ribosomal subunit. Associates with free 30S ribosomal subunits (but not with 30S subunits that are part of 70S ribosomes or polysomes). Required for efficient processing of 16S rRNA. May interact with the 5'-terminal helix region of 16S rRNA. This Stenotrophomonas maltophilia (strain R551-3) protein is Ribosome-binding factor A.